A 545-amino-acid chain; its full sequence is Chaperonin GroEL (545 aa).

ATP-binding positions include 30–33, Lys51, 87–91, Gly415, 483–485, and Asp499; these read TLGP, DGTTT, and NAA.

The protein belongs to the chaperonin (HSP60) family. Forms a cylinder of 14 subunits composed of two heptameric rings stacked back-to-back. Interacts with the co-chaperonin GroES.

The protein localises to the cytoplasm. It catalyses the reaction ATP + H2O + a folded polypeptide = ADP + phosphate + an unfolded polypeptide.. Functionally, together with its co-chaperonin GroES, plays an essential role in assisting protein folding. The GroEL-GroES system forms a nano-cage that allows encapsulation of the non-native substrate proteins and provides a physical environment optimized to promote and accelerate protein folding. The chain is Chaperonin GroEL from Aquifex aeolicus (strain VF5).